Here is a 367-residue protein sequence, read N- to C-terminus: D-alanine--D-alanine ligase (367 aa).

In terms of domain architecture, ATP-grasp spans 150–357; that stretch reads KKLLASAGLP…YPTLLATMVE (208 aa). 178–233 lines the ATP pocket; sequence RERLGLPVFVKPSRGGSSIGVSRVTAWDELPAAIELARRHDPKVIIEAAVPGRELE. Positions 312, 324, and 326 each coordinate Mg(2+).

This sequence belongs to the D-alanine--D-alanine ligase family. Requires Mg(2+) as cofactor. Mn(2+) serves as cofactor.

It localises to the cytoplasm. It catalyses the reaction 2 D-alanine + ATP = D-alanyl-D-alanine + ADP + phosphate + H(+). It functions in the pathway cell wall biogenesis; peptidoglycan biosynthesis. In terms of biological role, cell wall formation. The protein is D-alanine--D-alanine ligase of Mycolicibacterium gilvum (strain PYR-GCK) (Mycobacterium gilvum (strain PYR-GCK)).